The sequence spans 1364 residues: Trifunctional purine biosynthetic protein adenosine-3 (1364 aa).

An ATP-grasp domain is found at 114 to 321; it reads KDFMLRHGIP…LFEVMQACCS (208 aa). Position 140 to 202 (140 to 202) interacts with ATP; that stretch reads IRSAPYQALV…EELLEGEEIS (63 aa). Glu291 and Asn293 together coordinate Mn(2+). Residues 435-1154 are AIRS; it reads AIATAPGLSY…ARTQRMLSQP (720 aa). The GART stretch occupies residues 1155–1364; the sequence is RKRVAVLISG…EAPKDIKDSQ (210 aa). 1166-1168 serves as a coordination point for N(1)-(5-phospho-beta-D-ribosyl)glycinamide; that stretch reads GSN. (6R)-10-formyltetrahydrofolate-binding positions include Arg1221, 1246-1249, and Asn1263; that span reads MRIL. Catalysis depends on His1265, which acts as the Proton donor. Residue 1297–1301 participates in (6R)-10-formyltetrahydrofolate binding; that stretch reads DEGVD. 1327–1330 is a binding site for N(1)-(5-phospho-beta-D-ribosyl)glycinamide; sequence HYAE.

It in the N-terminal section; belongs to the GARS family. In the central section; belongs to the AIR synthase family. The protein in the C-terminal section; belongs to the GART family.

The enzyme catalyses 5-phospho-beta-D-ribosylamine + glycine + ATP = N(1)-(5-phospho-beta-D-ribosyl)glycinamide + ADP + phosphate + H(+). The catalysed reaction is 2-formamido-N(1)-(5-O-phospho-beta-D-ribosyl)acetamidine + ATP = 5-amino-1-(5-phospho-beta-D-ribosyl)imidazole + ADP + phosphate + H(+). It carries out the reaction N(1)-(5-phospho-beta-D-ribosyl)glycinamide + (6R)-10-formyltetrahydrofolate = N(2)-formyl-N(1)-(5-phospho-beta-D-ribosyl)glycinamide + (6S)-5,6,7,8-tetrahydrofolate + H(+). Its pathway is purine metabolism; IMP biosynthesis via de novo pathway; 5-amino-1-(5-phospho-D-ribosyl)imidazole from N(2)-formyl-N(1)-(5-phospho-D-ribosyl)glycinamide: step 2/2. The protein operates within purine metabolism; IMP biosynthesis via de novo pathway; N(1)-(5-phospho-D-ribosyl)glycinamide from 5-phospho-alpha-D-ribose 1-diphosphate: step 2/2. It functions in the pathway purine metabolism; IMP biosynthesis via de novo pathway; N(2)-formyl-N(1)-(5-phospho-D-ribosyl)glycinamide from N(1)-(5-phospho-D-ribosyl)glycinamide (10-formyl THF route): step 1/1. Functionally, trifunctional enzyme required for de novo purine biosynthesis. The protein is Trifunctional purine biosynthetic protein adenosine-3 (ade3) of Drosophila pseudoobscura pseudoobscura (Fruit fly).